The following is a 232-amino-acid chain: Y-linked testis-specific protein 1 (232 aa).

This sequence belongs to the SPIN/STSY family. In terms of tissue distribution, expressed in testis (at protein level).

The protein is Y-linked testis-specific protein 1 (Ssty1) of Mus musculus (Mouse).